A 163-amino-acid chain; its full sequence is Transcriptional repressor NrdR (163 aa).

A zinc finger lies at 3 to 34 (CPFCAYADTRVVDSRLADDGGSVRRRRECPQC). An ATP-cone domain is found at 49-139 (PVVVKTDGRR…VYRRFEDVDA (91 aa)).

This sequence belongs to the NrdR family. The cofactor is Zn(2+).

Functionally, negatively regulates transcription of bacterial ribonucleotide reductase nrd genes and operons by binding to NrdR-boxes. The protein is Transcriptional repressor NrdR of Acidithiobacillus ferrooxidans (strain ATCC 23270 / DSM 14882 / CIP 104768 / NCIMB 8455) (Ferrobacillus ferrooxidans (strain ATCC 23270)).